We begin with the raw amino-acid sequence, 580 residues long: Tetratricopeptide repeat protein 39C (580 aa).

3 TPR repeats span residues 312 to 345 (SLFM…AVDQ), 350 to 383 (HVCL…SRWS), and 482 to 515 (GLKH…ELCR).

This sequence belongs to the TTC39 family.

In Mus musculus (Mouse), this protein is Tetratricopeptide repeat protein 39C (Ttc39c).